The following is an 872-amino-acid chain: Protein translocase subunit SecA (872 aa).

Residues Gln87, 105 to 109, and Asp500 contribute to the ATP site; that span reads GEGKT. Residues Cys855, Cys857, Cys866, and His867 each coordinate Zn(2+).

Belongs to the SecA family. As to quaternary structure, monomer and homodimer. Part of the essential Sec protein translocation apparatus which comprises SecA, SecYEG and auxiliary proteins SecDF-YajC and YidC. Zn(2+) is required as a cofactor.

The protein resides in the cell inner membrane. Its subcellular location is the cytoplasm. It catalyses the reaction ATP + H2O + cellular proteinSide 1 = ADP + phosphate + cellular proteinSide 2.. Its function is as follows. Part of the Sec protein translocase complex. Interacts with the SecYEG preprotein conducting channel. Has a central role in coupling the hydrolysis of ATP to the transfer of proteins into and across the cell membrane, serving both as a receptor for the preprotein-SecB complex and as an ATP-driven molecular motor driving the stepwise translocation of polypeptide chains across the membrane. This Anaplasma marginale (strain St. Maries) protein is Protein translocase subunit SecA.